The chain runs to 429 residues: WRKY transcription factor 44 (429 aa).

Positions 159 to 223 (TGDRSSVDGY…YQGEHNHSKP (65 aa)) form a DNA-binding region, WRKY 1. Zn(2+)-binding residues include cysteine 190, cysteine 195, histidine 218, and histidine 220. Disordered regions lie at residues 214 to 279 (YQGE…RTEK) and 292 to 348 (AVPR…SDSL). 3 stretches are compositionally biased toward polar residues: residues 254–275 (QDPN…STQN), 295–313 (RSTN…SSQC), and 334–345 (SEAGVSQGSVES). Positions 343–408 (VESDSLEDGF…YEGKHNHHLL (66 aa)) form a DNA-binding region, WRKY 2. Zn(2+)-binding residues include cysteine 374, cysteine 379, histidine 403, and histidine 405. Low complexity predominate over residues 410 to 422 (SPPSSSTLPFNSP). The tract at residues 410 to 429 (SPPSSSTLPFNSPQLSKQTI) is disordered.

This sequence belongs to the WRKY group I family. As to expression, leaf promordia, trichomes, atrichoblasts, fertilized eggs, seed coat.

The protein resides in the nucleus. Transcription factor. Interacts specifically with the W box (5'-(T)TGAC[CT]-3'), a frequently occurring elicitor-responsive cis-acting element. Regulates trichome development, production of mucilage and tannin in seed coats, and maybe root hair development. The sequence is that of WRKY transcription factor 44 (WRKY44) from Arabidopsis thaliana (Mouse-ear cress).